Reading from the N-terminus, the 345-residue chain is Protein GAMETE CELL DEFECTIVE 1, mitochondrial (345 aa).

Residues 1-43 (MLALRKTLLHGRLPAAPPAAAAAAIASRIPALLRRLSSSPGDG) constitute a mitochondrion transit peptide. The tract at residues 36-82 (LSSSPGDGQGGDEWGSSWSTGITKEHFDGSDAAVGRPVTSPSKPVSP) is disordered.

It is found in the mitochondrion. In terms of biological role, essential for fertility (male and female gametophyte functions and development). Required for the integrity of female gametic mitochondria. Involved in embryo apical-basal patterning, and particularly dorsal-ventral patterning, during early embryogenesis, and endosperm free nucleus positioning and development as well as early endosperm development, probably by modulating the expression pattern of related genes (e.g. AL1, MYB3/AL2, CYP78A13/GE, PNH1, HAZ1, MPK6 and OSH1). Has function in triggering of endosperm programmed cell death (PCD) leading to syncytial endosperm cellularization and starchy endosperm cell maturation. Implicated in central vacuole dynamics necessary for microspore development leading to pollen production, and for pollen development and germination. This Oryza sativa subsp. indica (Rice) protein is Protein GAMETE CELL DEFECTIVE 1, mitochondrial.